The chain runs to 185 residues: Ribosome-recycling factor (185 aa).

The protein belongs to the RRF family.

The protein localises to the cytoplasm. Functionally, responsible for the release of ribosomes from messenger RNA at the termination of protein biosynthesis. May increase the efficiency of translation by recycling ribosomes from one round of translation to another. This Mycobacteroides abscessus (strain ATCC 19977 / DSM 44196 / CCUG 20993 / CIP 104536 / JCM 13569 / NCTC 13031 / TMC 1543 / L948) (Mycobacterium abscessus) protein is Ribosome-recycling factor.